A 634-amino-acid chain; its full sequence is Sodium-dependent multivitamin transporter (634 aa).

12 consecutive transmembrane segments (helical) span residues 23 to 43, 65 to 85, 100 to 120, 142 to 162, 175 to 195, 207 to 227, 255 to 275, 295 to 315, 350 to 370, 403 to 423, 427 to 447, and 455 to 475; these read FSVV…VIGL, MGCL…VAIL, FLGC…IPVF, ICGT…ALYA, LWLS…LGGL, LVMF…VGGL, FWTL…VNQA, AVFP…LVMF, LPGL…SSAF, FAYG…GSVL, LSIF…GLFF, and AIVG…GSIV. N-linked (GlcNAc...) asparagine glycans are attached at residues asparagine 488 and asparagine 497. The helical transmembrane segment at 526 to 546 threads the bilayer; that stretch reads LWYSAHNSTTVIVVGLIVSLL.

This sequence belongs to the sodium:solute symporter (SSF) (TC 2.A.21) family. In terms of assembly, interacts with PDZD11. In terms of tissue distribution, expressed in the intestinal mucosa, liver and kidney (at protein level). Expressed in the colon.

The protein resides in the cell membrane. It is found in the apical cell membrane. The enzyme catalyses biotin(out) + 2 Na(+)(out) = biotin(in) + 2 Na(+)(in). It catalyses the reaction (R)-pantothenate(out) + 2 Na(+)(out) = (R)-pantothenate(in) + 2 Na(+)(in). It carries out the reaction (R)-lipoate(out) + 2 Na(+)(out) = (R)-lipoate(in) + 2 Na(+)(in). The catalysed reaction is iodide(out) + 2 Na(+)(out) = iodide(in) + 2 Na(+)(in). Functionally, sodium-dependent multivitamin transporter that mediates the electrogenic transport of pantothenate, biotin, lipoate and iodide. Functions as a Na(+)-coupled substrate symporter where the stoichiometry of Na(+):substrate is 2:1, creating an electrochemical Na(+) gradient used as driving force for substrate uptake. Required for biotin and pantothenate uptake in the intestine across the brush border membrane. Plays a role in the maintenance of intestinal mucosa integrity, by providing the gut mucosa with biotin. Contributes to the luminal uptake of biotin and pantothenate into the brain across the blood-brain barrier. This chain is Sodium-dependent multivitamin transporter, found in Mus musculus (Mouse).